The chain runs to 224 residues: Uracil phosphoribosyltransferase (224 aa).

38–42 contacts GTP; the sequence is KGLVK. 5-phospho-alpha-D-ribose 1-diphosphate contacts are provided by residues R87, R112, and 140-148; that span reads DPMIATGST. Residues I204 and 209–211 contribute to the uracil site; that span reads GDA. A 5-phospho-alpha-D-ribose 1-diphosphate-binding site is contributed by D210.

Belongs to the UPRTase family. The cofactor is Mg(2+).

It catalyses the reaction UMP + diphosphate = 5-phospho-alpha-D-ribose 1-diphosphate + uracil. It functions in the pathway pyrimidine metabolism; UMP biosynthesis via salvage pathway; UMP from uracil: step 1/1. Its activity is regulated as follows. Allosterically activated by GTP. Catalyzes the conversion of uracil and 5-phospho-alpha-D-ribose 1-diphosphate (PRPP) to UMP and diphosphate. The chain is Uracil phosphoribosyltransferase from Thermococcus gammatolerans (strain DSM 15229 / JCM 11827 / EJ3).